A 197-amino-acid chain; its full sequence is Peptide deformylase (197 aa).

2 residues coordinate Fe cation: Cys106 and His148. Glu149 is a catalytic residue. Residue His152 participates in Fe cation binding.

Belongs to the polypeptide deformylase family. Fe(2+) serves as cofactor.

It carries out the reaction N-terminal N-formyl-L-methionyl-[peptide] + H2O = N-terminal L-methionyl-[peptide] + formate. Functionally, removes the formyl group from the N-terminal Met of newly synthesized proteins. Requires at least a dipeptide for an efficient rate of reaction. N-terminal L-methionine is a prerequisite for activity but the enzyme has broad specificity at other positions. This is Peptide deformylase from Mycobacteroides abscessus (strain ATCC 19977 / DSM 44196 / CCUG 20993 / CIP 104536 / JCM 13569 / NCTC 13031 / TMC 1543 / L948) (Mycobacterium abscessus).